We begin with the raw amino-acid sequence, 298 residues long: MKQDLARIEQFLDALWLEKNLAENTLNAYRRDLSMMVEWLHHRGLTLATAQSDDLQALLAERLEGGYKATSSARLLSAVRRLFQYLYREKFREDDPSAHLASPKLPQRLPKDLSEAQVERLLQAPLIDQPLELRDKAMLEVLYATGLRVSELVGLTMSDISLRQGVVRVIGKGNKERLVPLGEEAVYWLETYLEHGRPWLLNGVSIDVLFPSQRAQQMTRQTFWHRIKHYAVLAGIDSEKLSPHVLRHAFATHLLNHGADLRVVQMLLGHSDLSTTQIYTHVATERLRQLHQQHHPRA.

In terms of domain architecture, Core-binding (CB) spans lysine 2 to tyrosine 87. The Tyr recombinase domain maps to arginine 108–glutamine 292. Residues arginine 148, lysine 172, histidine 244, arginine 247, and histidine 270 contribute to the active site. Residue tyrosine 279 is the O-(3'-phospho-DNA)-tyrosine intermediate of the active site.

Belongs to the 'phage' integrase family. XerD subfamily. Forms a cyclic heterotetrameric complex composed of two molecules of XerC and two molecules of XerD, in which XerC interacts with XerD via its C-terminal region, XerD interacts with XerC via its C-terminal region and so on.

Its subcellular location is the cytoplasm. Its activity is regulated as follows. FtsK may regulate the catalytic switch between XerC and XerD in the heterotetrameric complex during the two steps of the recombination process. Site-specific tyrosine recombinase, which acts by catalyzing the cutting and rejoining of the recombining DNA molecules. Binds cooperatively to specific DNA consensus sequences that are separated from XerC binding sites by a short central region, forming the heterotetrameric XerC-XerD complex that recombines DNA substrates. The complex is essential to convert dimers of the bacterial chromosome into monomers to permit their segregation at cell division. It also contributes to the segregational stability of plasmids. In the complex XerD specifically exchanges the bottom DNA strands. This Escherichia coli O6:H1 (strain CFT073 / ATCC 700928 / UPEC) protein is Tyrosine recombinase XerD (xerD).